The primary structure comprises 245 residues: 4-hydroxy-tetrahydrodipicolinate reductase (245 aa).

Residues 7-12, 75-77, and 102-105 each bind NAD(+); these read GAKGKV, GTT, and APNF. The active-site Proton donor/acceptor is the His132. His133 lines the (S)-2,3,4,5-tetrahydrodipicolinate pocket. Lys136 serves as the catalytic Proton donor. 142–143 is a binding site for (S)-2,3,4,5-tetrahydrodipicolinate; it reads GT.

This sequence belongs to the DapB family.

It is found in the cytoplasm. It carries out the reaction (S)-2,3,4,5-tetrahydrodipicolinate + NAD(+) + H2O = (2S,4S)-4-hydroxy-2,3,4,5-tetrahydrodipicolinate + NADH + H(+). It catalyses the reaction (S)-2,3,4,5-tetrahydrodipicolinate + NADP(+) + H2O = (2S,4S)-4-hydroxy-2,3,4,5-tetrahydrodipicolinate + NADPH + H(+). The protein operates within amino-acid biosynthesis; L-lysine biosynthesis via DAP pathway; (S)-tetrahydrodipicolinate from L-aspartate: step 4/4. Its function is as follows. Catalyzes the conversion of 4-hydroxy-tetrahydrodipicolinate (HTPA) to tetrahydrodipicolinate. The polypeptide is 4-hydroxy-tetrahydrodipicolinate reductase (Mycolicibacterium gilvum (strain PYR-GCK) (Mycobacterium gilvum (strain PYR-GCK))).